Here is an 809-residue protein sequence, read N- to C-terminus: F-BAR domain only protein 2 (809 aa).

The F-BAR domain maps to 3–250 (MAHFVENFWG…NMANTTIESL (248 aa)). Residues 3-274 (MAHFVENFWG…PGLIEFEECD (272 aa)) are mediates dimerization and binding to membranes enriched in Pi(4,5)-P2 and induces their tubulation. Positions 87-156 (HLDLVRKLQE…CVEQERLKKE (70 aa)) form a coiled coil. Lysine 297 is covalently cross-linked (Glycyl lysine isopeptide (Lys-Gly) (interchain with G-Cter in SUMO2)). Residues 301–352 (DAESVECPDADSLNIPDVDEEGFSIKPEANQNDTKENHFYSSSDSDSEDEEP) are disordered. Residue serine 312 is modified to Phosphoserine. Threonine 385 bears the Phosphothreonine mark. Residues serine 387, serine 394, serine 402, and serine 403 each carry the phosphoserine modification. Over residues 390–416 (VSRHSPVQMNRNSSNEELTKSKPSSLP) the composition is skewed to polar residues. 2 disordered regions span residues 390-422 (VSRH…KGTN) and 435-536 (LESS…PVSL). A compositionally biased stretch (low complexity) spans 435–456 (LESSSAPLTSSSSARPTTPLSL). Residues serine 487, serine 492, serine 495, serine 507, serine 509, serine 510, and serine 532 each carry the phosphoserine modification. The segment covering 501–520 (PLARAESSSSISSSASLSAA) has biased composition (low complexity). The mediates interaction with DAB2, EPS15, EPS15R and ITSN1 stretch occupies residues 520-809 (ANTPTVGVSR…FATGRYLADC (290 aa)). Positions 541–808 (TLPVAIALTE…RFATGRYLAD (268 aa)) constitute an MHD domain.

The protein belongs to the FCHO family. In terms of assembly, homodimer; disulfide-linked. May form homotetramer. Interacts with AP2A1. Interacts with EPS15, EPS15R, ITSN1 and ITSN2; recruit those scaffolding proteins which in turn may interact with the adaptor protein complex AP-2 at the plasma membrane. Interacts with DAB2 (via DPF motifs); mediates LDL receptor/LDLR endocytosis. Post-translationally, ubiquitinated. Mainly undergoes monoubiquitination but also polyubiquitination. As to expression, ubiquitously expressed (at protein level).

It is found in the membrane. Its subcellular location is the clathrin-coated pit. In terms of biological role, functions in an early step of clathrin-mediated endocytosis. Has both a membrane binding/bending activity and the ability to recruit proteins essential to the formation of functional clathrin-coated pits. Has a lipid-binding activity with a preference for membranes enriched in phosphatidylserine and phosphoinositides (Pi(4,5) biphosphate) like the plasma membrane. Its membrane-bending activity might be important for the subsequent action of clathrin and adaptors in the formation of clathrin-coated vesicles. Involved in adaptor protein complex AP-2-dependent endocytosis of the transferrin receptor, it also functions in the AP-2-independent endocytosis of the LDL receptor. The chain is F-BAR domain only protein 2 (Fcho2) from Mus musculus (Mouse).